Reading from the N-terminus, the 440-residue chain is Adenylosuccinate synthetase (440 aa).

GTP is bound by residues 12 to 18 (GDEGKGK) and 40 to 42 (GHT). Aspartate 13 functions as the Proton acceptor in the catalytic mechanism. Residues aspartate 13 and glycine 40 each coordinate Mg(2+). Residues 13–16 (DEGK), 38–41 (NAGH), threonine 128, arginine 142, glutamine 223, threonine 238, and arginine 302 each bind IMP. Catalysis depends on histidine 41, which acts as the Proton donor. 298–304 (TTTGRPR) contacts substrate. GTP is bound by residues arginine 304, 330–332 (KLD), and 412–414 (SVG).

This sequence belongs to the adenylosuccinate synthetase family. As to quaternary structure, homodimer. Requires Mg(2+) as cofactor.

It localises to the cytoplasm. It catalyses the reaction IMP + L-aspartate + GTP = N(6)-(1,2-dicarboxyethyl)-AMP + GDP + phosphate + 2 H(+). It participates in purine metabolism; AMP biosynthesis via de novo pathway; AMP from IMP: step 1/2. In terms of biological role, plays an important role in the de novo pathway of purine nucleotide biosynthesis. Catalyzes the first committed step in the biosynthesis of AMP from IMP. This is Adenylosuccinate synthetase from Gloeobacter violaceus (strain ATCC 29082 / PCC 7421).